Here is a 60-residue protein sequence, read N- to C-terminus: Small ribosomal subunit protein eS31 (60 aa).

Residues cysteine 32, cysteine 35, cysteine 50, and cysteine 53 each contribute to the Zn(2+) site. The C4-type zinc finger occupies 32 to 53; it reads CPRCGAGVFMGEHKDRFSCGKC.

This sequence belongs to the eukaryotic ribosomal protein eS31 family. In terms of assembly, part of the 30S ribosomal subunit. Requires Zn(2+) as cofactor.

This chain is Small ribosomal subunit protein eS31, found in Methanocorpusculum labreanum (strain ATCC 43576 / DSM 4855 / Z).